A 488-amino-acid chain; its full sequence is Glutamyl-tRNA(Gln) amidotransferase subunit A (488 aa).

Active-site charge relay system residues include lysine 80 and serine 155. Serine 179 acts as the Acyl-ester intermediate in catalysis.

It belongs to the amidase family. GatA subfamily. In terms of assembly, heterotrimer of A, B and C subunits.

It carries out the reaction L-glutamyl-tRNA(Gln) + L-glutamine + ATP + H2O = L-glutaminyl-tRNA(Gln) + L-glutamate + ADP + phosphate + H(+). Its function is as follows. Allows the formation of correctly charged Gln-tRNA(Gln) through the transamidation of misacylated Glu-tRNA(Gln) in organisms which lack glutaminyl-tRNA synthetase. The reaction takes place in the presence of glutamine and ATP through an activated gamma-phospho-Glu-tRNA(Gln). The chain is Glutamyl-tRNA(Gln) amidotransferase subunit A from Chloroflexus aggregans (strain MD-66 / DSM 9485).